Reading from the N-terminus, the 201-residue chain is FMN-dependent NADH:quinone oxidoreductase (201 aa).

Residues Ser10, 16-18 (SQS), 96-99 (MYNF), and 140-143 (SRGG) contribute to the FMN site.

This sequence belongs to the azoreductase type 1 family. As to quaternary structure, homodimer. FMN is required as a cofactor.

The enzyme catalyses 2 a quinone + NADH + H(+) = 2 a 1,4-benzosemiquinone + NAD(+). It catalyses the reaction N,N-dimethyl-1,4-phenylenediamine + anthranilate + 2 NAD(+) = 2-(4-dimethylaminophenyl)diazenylbenzoate + 2 NADH + 2 H(+). Quinone reductase that provides resistance to thiol-specific stress caused by electrophilic quinones. In terms of biological role, also exhibits azoreductase activity. Catalyzes the reductive cleavage of the azo bond in aromatic azo compounds to the corresponding amines. In Shigella flexneri serotype 5b (strain 8401), this protein is FMN-dependent NADH:quinone oxidoreductase.